A 152-amino-acid chain; its full sequence is Sulfur-rich protein (152 aa).

The segment covering 1-11 (MSTTPIVSGVT) has biased composition (polar residues). The segment at 1–21 (MSTTPIVSGVTSQNNSSENVS) is disordered. Over residues 12–21 (SQNNSSENVS) the composition is skewed to low complexity. 2 consecutive transmembrane segments (helical) span residues 44-64 (VGLA…LFIL) and 73-93 (IYLA…ILSM).

The protein localises to the membrane. This is Sulfur-rich protein (srp) from Chlamydia muridarum (strain MoPn / Nigg).